The chain runs to 239 residues: Mannose-binding protein A (239 aa).

An N-terminal signal peptide occupies residues 1–18 (MLLLPLLPVLLCVVSVSS). A disordered region spans residues 35 to 88 (ACGRDGRDGPKGEKGEPGQGLRGLQGPPGKLGPPGSVGSPGSPGPKGQKGDHGD). In terms of domain architecture, Collagen-like spans 37-89 (GRDGRDGPKGEKGEPGQGLRGLQGPPGKLGPPGSVGSPGSPGPKGQKGDHGDN). The segment covering 38–50 (RDGRDGPKGEKGE) has biased composition (basic and acidic residues). Pro-44 bears the 4-hydroxyproline mark. 5-hydroxylysine occurs at positions 45 and 48. Residues Lys-45 and Lys-48 are each glycosylated (O-linked (Gal...) hydroxylysine). 4-hydroxyproline is present on residues Pro-51, Pro-62, Pro-68, Pro-74, and Pro-79. Residues 58 to 74 (LQGPPGKLGPPGSVGSP) are compositionally biased toward low complexity. 5-hydroxylysine occurs at positions 80 and 83. Lys-80 and Lys-83 each carry an O-linked (Gal...) hydroxylysine glycan. Residues 144–239 (SLCTELQGTV…SFKAVCEFPA (96 aa)) enclose the C-type lectin domain. 2 disulfide bridges follow: Cys-146-Cys-235 and Cys-213-Cys-227. Ca(2+)-binding residues include Asp-179, Glu-183, Glu-203, Asn-205, Glu-211, Asp-212, Asn-223, and Asp-224. Residues 203 to 211 (EPNNHGSGE) form a calcium-dependent carbohydrate binding region.

As to quaternary structure, homotrimer. Forms higher oligomeric complexes formed by the association of two, three or more homotrimers. Oligomerization occurs in the endoplasmic reticulum. Interacts with MASP1 and MASP2. Hydroxylated on lysine and proline residues within the collagen-like domain. Post-translationally, O-glycosylated. O-linked glycans on hydroxylysine residues consist of Glc-Gal disaccharides bound to the oxygen atom of post-translationally added hydroxyl groups. In terms of tissue distribution, detected in liver and blood serum (at protein level). Detected in liver.

It localises to the secreted. In terms of biological role, calcium-dependent lectin. Plays a role in the innate immune response by binding mannose, fucose and N-acetylglucosamine moieties on different microorganisms and mediating activation of the lectin complement pathway. Binds to late apoptotic cells, as well as to apoptotic blebs and to necrotic cells, but not to early apoptotic cells, facilitating their uptake by macrophages. In Mus musculus (Mouse), this protein is Mannose-binding protein A (Mbl1).